The sequence spans 448 residues: SVP1-like protein 2 (448 aa).

Asn61, Asn155, Asn256, Asn280, Asn315, and Asn421 each carry an N-linked (GlcNAc...) asparagine glycan. WD repeat units follow at residues 222–262 (AHKN…LIKE) and 267–306 (VDKADIYEMSFSPNGSKLAVLSNKQTLHIFQIFETTNTET). Residues 416–435 (THYSLNESLRNEDTKSAGEP) form a disordered region. Residues 424–435 (LRNEDTKSAGEP) are compositionally biased toward basic and acidic residues.

Belongs to the WD repeat PROPPIN family. N-glycosylated.

Its subcellular location is the endosome membrane. It localises to the prevacuolar compartment membrane. In terms of biological role, involved in piecemeal microautophagy of the nucleus (micronucleophagy). The polypeptide is SVP1-like protein 2 (HSV2) (Saccharomyces cerevisiae (strain ATCC 204508 / S288c) (Baker's yeast)).